The following is a 505-amino-acid chain: Probable Xaa-Pro aminopeptidase Pc16g13390 (505 aa).

The Mn(2+) site is built by Asp-287, Asp-298, Glu-436, and Glu-475.

It belongs to the peptidase M24B family. The cofactor is Mn(2+).

The enzyme catalyses Release of any N-terminal amino acid, including proline, that is linked to proline, even from a dipeptide or tripeptide.. Its function is as follows. Catalyzes the removal of a penultimate prolyl residue from the N-termini of peptides. This Penicillium rubens (strain ATCC 28089 / DSM 1075 / NRRL 1951 / Wisconsin 54-1255) (Penicillium chrysogenum) protein is Probable Xaa-Pro aminopeptidase Pc16g13390.